A 562-amino-acid polypeptide reads, in one-letter code: Sperm-tail PG-rich repeat-containing protein 2 (562 aa).

STPGR repeat units follow at residues G21–L31, S60–N73, and P96–P118. Disordered regions lie at residues K114–I136 and S192–Q215. Over residues P127–I136 the composition is skewed to low complexity. Positions G193–D202 are enriched in basic and acidic residues. STPGR repeat units lie at residues P204 to E227, P253 to H271, T336 to A350, T385 to F409, T425 to L462, and T478 to S492. Residues S543 to A562 are disordered. Basic residues predominate over residues R551–A562.

The protein is Sperm-tail PG-rich repeat-containing protein 2 (stpg2) of Danio rerio (Zebrafish).